The chain runs to 63 residues: MVATVKDEHPTSEIDYNKIRSSREEMMRRFKEAHDKAKAEGTITYKRIKFKSSNEPLYGVLCG.

This is an uncharacterized protein from Enterobacteria phage T4 (Bacteriophage T4).